A 116-amino-acid polypeptide reads, in one-letter code: Proline-rich protein 9 (116 aa).

The polypeptide is Proline-rich protein 9 (Prr9) (Mus musculus (Mouse)).